The sequence spans 662 residues: Retaining alpha-galactosidase (662 aa).

The signal sequence occupies residues 1-19; sequence MKKLTFLLLCVLCTLSLQA. Glutamate 174 contributes to the Ca(2+) binding site. Residue aspartate 415 is the Nucleophile of the active site. Positions 464 and 470 each coordinate Ca(2+). Residue glutamate 470 is the Proton donor/acceptor of the active site.

This sequence belongs to the glycosyl hydrolase 97 family. As to quaternary structure, monomer. Requires Ca(2+) as cofactor.

The enzyme catalyses Hydrolysis of terminal, non-reducing alpha-D-galactose residues in alpha-D-galactosides, including galactose oligosaccharides, galactomannans and galactolipids.. Inhibited by EDTA in vitro. Its function is as follows. Galactosidase that is able to hydrolyze the alpha-1,6 disaccharide melibiose and the synthetic p-nitrophenyl alpha-galactoside substrate (pNP-Gal), with retention of the anomeric configuration. Does not hydrolyze DNP-Glc or pNP-Glc. The protein is Retaining alpha-galactosidase of Bacteroides thetaiotaomicron (strain ATCC 29148 / DSM 2079 / JCM 5827 / CCUG 10774 / NCTC 10582 / VPI-5482 / E50).